We begin with the raw amino-acid sequence, 335 residues long: Nucleoid-associated protein PputGB1_0980 (335 aa).

This sequence belongs to the YejK family.

The protein resides in the cytoplasm. It localises to the nucleoid. The polypeptide is Nucleoid-associated protein PputGB1_0980 (Pseudomonas putida (strain GB-1)).